We begin with the raw amino-acid sequence, 88 residues long: Small ribosomal subunit protein bS16 (88 aa).

It belongs to the bacterial ribosomal protein bS16 family.

The chain is Small ribosomal subunit protein bS16 from Geobacter metallireducens (strain ATCC 53774 / DSM 7210 / GS-15).